Consider the following 643-residue polypeptide: Protein THEMIS2 (643 aa).

CABIT stretches follow at residues M1–S238 and R239–G514. The disordered stretch occupies residues E546 to D631. Position 593 is a phosphothreonine (T593). Basic residues predominate over residues P609–K619. Y632 is subject to Phosphotyrosine.

The protein belongs to the themis family. As to quaternary structure, interacts with VAV1. Interacts with LAT. Interacts constitutively with GRB2, LYN and PLCG2; these interactions increase the activation of PLCG2 and its downstream pathways following B cell receptor stimulation. In terms of processing, phosphorylation at Tyr-632 is induced by LPS. Phosphorylated by Src kinases (Lck or Fyn) following BCR engagement. Expressed in different endometrial adenocarcinoma cell lines and various other cell lines apart from the prostate cell line LNCaP and the ovarian cancer cell line BG1.

Its subcellular location is the nucleus. It is found in the cytoplasm. May constitute a control point in macrophage inflammatory response, promoting LPS-induced TLR4-mediated TNF production. Determines the threshold for activation of B cells by low-affinity and low-avidity ligands via PLCG2 activation and its downstream pathways. The polypeptide is Protein THEMIS2 (Homo sapiens (Human)).